A 191-amino-acid polypeptide reads, in one-letter code: Ribonuclease M5 (191 aa).

The Toprim domain maps to 8–91; sequence HEFIVVEGRD…AFINRQDALP (84 aa). Mg(2+) contacts are provided by E14, D60, and D62.

Belongs to the ribonuclease M5 family. Mg(2+) serves as cofactor.

It localises to the cytoplasm. It carries out the reaction Endonucleolytic cleavage of RNA, removing 21 and 42 nucleotides, respectively, from the 5'- and 3'-termini of a 5S-rRNA precursor.. Required for correct processing of both the 5' and 3' ends of 5S rRNA precursor. Cleaves both sides of a double-stranded region yielding mature 5S rRNA in one step. This Listeria monocytogenes serovar 1/2a (strain ATCC BAA-679 / EGD-e) protein is Ribonuclease M5.